A 786-amino-acid polypeptide reads, in one-letter code: Endonuclease MutS2 (786 aa).

334–341 (GPNTGGKT) lines the ATP pocket. The Smr domain occupies 711-786 (LDLRGERYEN…GNGATVVYFK (76 aa)).

This sequence belongs to the DNA mismatch repair MutS family. MutS2 subfamily. In terms of assembly, homodimer. Binds to stalled ribosomes, contacting rRNA.

Endonuclease that is involved in the suppression of homologous recombination and thus may have a key role in the control of bacterial genetic diversity. Functionally, acts as a ribosome collision sensor, splitting the ribosome into its 2 subunits. Detects stalled/collided 70S ribosomes which it binds and splits by an ATP-hydrolysis driven conformational change. Acts upstream of the ribosome quality control system (RQC), a ribosome-associated complex that mediates the extraction of incompletely synthesized nascent chains from stalled ribosomes and their subsequent degradation. Probably generates substrates for RQC. In Ligilactobacillus salivarius (strain UCC118) (Lactobacillus salivarius), this protein is Endonuclease MutS2.